Reading from the N-terminus, the 471-residue chain is Lincomycin resistance protein LmrB (471 aa).

Transmembrane regions (helical) follow at residues 15-34 (PIIA…ETAL), 55-77 (LTTG…LQWF), 82-104 (LFFT…PTFA), 111-131 (VVQA…ILLI), 141-163 (MGMI…GLIL), 170-187 (WIFW…LFGM), 202-224 (DILS…SSAG), 231-253 (ATVL…RQLT), 268-290 (MFTL…MILL), 297-319 (SLAL…NGLM), 329-351 (AYGP…FFLT), 358-380 (SALT…MMPA), and 445-467 (GIQN…SLFI).

It belongs to the major facilitator superfamily. EmrB family.

It localises to the cell membrane. Functionally, proton-dependent transporter. May mediate the efflux of lincomycin. The protein is Lincomycin resistance protein LmrB (lmrB) of Listeria innocua serovar 6a (strain ATCC BAA-680 / CLIP 11262).